The chain runs to 125 residues: Ribosome-binding factor A (125 aa).

It belongs to the RbfA family. Monomer. Binds 30S ribosomal subunits, but not 50S ribosomal subunits or 70S ribosomes.

The protein localises to the cytoplasm. Functionally, one of several proteins that assist in the late maturation steps of the functional core of the 30S ribosomal subunit. Associates with free 30S ribosomal subunits (but not with 30S subunits that are part of 70S ribosomes or polysomes). Required for efficient processing of 16S rRNA. May interact with the 5'-terminal helix region of 16S rRNA. The polypeptide is Ribosome-binding factor A (Carboxydothermus hydrogenoformans (strain ATCC BAA-161 / DSM 6008 / Z-2901)).